Consider the following 267-residue polypeptide: Cell division protein FtsQ (267 aa).

The Cytoplasmic segment spans residues 1 to 32 (MRKKTSSNKKKQTKKTNNISLRRKLRLIYKKA). The chain crosses the membrane as a helical span at residues 33-53 (ILGLKIALIIFVCLFVFTKYF). The Periplasmic portion of the chain corresponds to 54 to 267 (AGIKTYLTTN…DKNKYYIEKY (214 aa)). A POTRA domain is found at 73–141 (FKLENVIIEG…NTVYIKLFER (69 aa)).

This sequence belongs to the FtsQ/DivIB family. FtsQ subfamily.

Its subcellular location is the cell inner membrane. Functionally, essential cell division protein. This Rickettsia felis (strain ATCC VR-1525 / URRWXCal2) (Rickettsia azadi) protein is Cell division protein FtsQ.